A 279-amino-acid chain; its full sequence is Ribosomal RNA small subunit methyltransferase J (279 aa).

S-adenosyl-L-methionine contacts are provided by residues 138–139 (ER) and aspartate 194.

The protein belongs to the methyltransferase superfamily. RsmJ family.

The protein localises to the cytoplasm. It carries out the reaction guanosine(1516) in 16S rRNA + S-adenosyl-L-methionine = N(2)-methylguanosine(1516) in 16S rRNA + S-adenosyl-L-homocysteine + H(+). In terms of biological role, specifically methylates the guanosine in position 1516 of 16S rRNA. This chain is Ribosomal RNA small subunit methyltransferase J, found in Acinetobacter baumannii (strain ACICU).